The chain runs to 417 residues: UDP-N-acetylglucosamine 1-carboxyvinyltransferase 2 (417 aa).

22 to 23 (KN) is a binding site for phosphoenolpyruvate. Arginine 94 contacts UDP-N-acetyl-alpha-D-glucosamine. Cysteine 118 serves as the catalytic Proton donor. 2-(S-cysteinyl)pyruvic acid O-phosphothioketal is present on cysteine 118. UDP-N-acetyl-alpha-D-glucosamine is bound by residues 123-127 (RPIDL), aspartate 306, and isoleucine 328.

Belongs to the EPSP synthase family. MurA subfamily.

Its subcellular location is the cytoplasm. The enzyme catalyses phosphoenolpyruvate + UDP-N-acetyl-alpha-D-glucosamine = UDP-N-acetyl-3-O-(1-carboxyvinyl)-alpha-D-glucosamine + phosphate. The protein operates within cell wall biogenesis; peptidoglycan biosynthesis. Cell wall formation. Adds enolpyruvyl to UDP-N-acetylglucosamine. The chain is UDP-N-acetylglucosamine 1-carboxyvinyltransferase 2 from Clostridium tetani (strain Massachusetts / E88).